We begin with the raw amino-acid sequence, 363 residues long: Glyceraldehyde-3-phosphate dehydrogenase, muscle (363 aa).

The interaction with WARS stretch occupies residues 1 to 176 (MVKVGVNGFG…KYDKSLKIVS (176 aa)). Position 3 is an N6,N6-dimethyllysine (K3). Deamidated asparagine is present on N7. NAD(+) contacts are provided by residues 11–12 (RI) and D33. Position 70 is a phosphotyrosine (Y70). K89 is subject to N6-acetyllysine. N92 is modified (deamidated asparagine). Residue K94 is modified to N6,N6-dimethyllysine. N98 is subject to Deamidated asparagine. A Phosphothreonine modification is found at T103. 2 residues coordinate NAD(+): R108 and S150. 2 positions are modified to phosphoserine: S150 and S176. N177 carries the deamidated asparagine modification. S179 carries the phosphoserine modification. 179–181 (SCT) contributes to the D-glyceraldehyde 3-phosphate binding site. The Nucleophile role is filled by C180. C180 carries the ADP-ribosylcysteine; by autocatalysis; in irreversibly inhibited form modification. The residue at position 180 (C180) is a Cysteine persulfide. S-(2-succinyl)cysteine is present on C180. Residue C180 is modified to S-nitrosocysteine; in reversibly inhibited form. Position 181 is a phosphothreonine (T181). Position 183 is a deamidated asparagine (N183). A phosphothreonine mark is found at T205, T210, and T212. T210 serves as a coordination point for D-glyceraldehyde 3-phosphate. K214 is covalently cross-linked (Glycyl lysine isopeptide (Lys-Gly) (interchain with G-Cter in SUMO2)). K222 bears the N6,N6-dimethyllysine; alternate mark. K222 carries the post-translational modification N6-acetyllysine; alternate. K222 carries the N6-malonyllysine; alternate modification. T239 bears the Phosphothreonine mark. 239–240 (TG) is a binding site for D-glyceraldehyde 3-phosphate. K243 is subject to N6,N6-dimethyllysine; alternate. Position 243 is an N6-malonyllysine; alternate (K243). K247 bears the N6-acetyllysine mark. N253 carries the deamidated asparagine modification. Position 255 is an N6,N6-dimethyllysine; alternate (K255). K255 bears the N6-acetyllysine; alternate mark. T257 carries the phosphothreonine modification. R262 contacts D-glyceraldehyde 3-phosphate. T265 bears the Phosphothreonine mark. A Phosphoserine modification is found at S269. The residue at position 275 (C275) is an S-(2-succinyl)cysteine. C275 carries the post-translational modification S-nitrosocysteine. K282 is subject to N6-acetyllysine. N6,N6-dimethyllysine is present on K291. The residue at position 340 (S340) is a Phosphoserine. N344 bears the Deamidated asparagine mark. An NAD(+)-binding site is contributed by N344. At S361 the chain carries Phosphoserine. At K362 the chain carries N6,N6-dimethyllysine.

This sequence belongs to the glyceraldehyde-3-phosphate dehydrogenase family. Homotetramer. Interacts with TPPP; the interaction is direct. Interacts (when S-nitrosylated) with SIAH1; leading to nuclear translocation. Interacts with RILPL1/GOSPEL, leading to prevent the interaction between GAPDH and SIAH1 and prevent nuclear translocation. Interacts with CHP1; the interaction increases the binding of CHP1 with microtubules. Associates with microtubules. Interacts with EIF1AD, USP25, PRKCI and WARS1. Interacts with phosphorylated RPL13A; inhibited by oxidatively-modified low-densitity lipoprotein (LDL(ox)). Component of the GAIT complex. Interacts with FKBP6; leading to inhibit GAPDH catalytic activity. Interacts with TRAF2, promoting TRAF2 ubiquitination. Interacts with TRAF3, promoting TRAF3 ubiquitination. ISGylated. Post-translationally, S-nitrosylation of Cys-180 leads to interaction with SIAH1, followed by translocation to the nucleus S-nitrosylation of Cys-275 is induced by interferon-gamma and LDL(ox) implicating the iNOS-S100A8/9 transnitrosylase complex and seems to prevent interaction with phosphorylated RPL13A and to interfere with GAIT complex activity. In terms of processing, sulfhydration at Cys-180 increases catalytic activity.

The protein resides in the cytoplasm. It is found in the cytosol. The protein localises to the cytoskeleton. Its subcellular location is the nucleus. It carries out the reaction D-glyceraldehyde 3-phosphate + phosphate + NAD(+) = (2R)-3-phospho-glyceroyl phosphate + NADH + H(+). The enzyme catalyses S-nitroso-L-cysteinyl-[GAPDH] + L-cysteinyl-[protein] = L-cysteinyl-[GAPDH] + S-nitroso-L-cysteinyl-[protein]. It functions in the pathway carbohydrate degradation; glycolysis; pyruvate from D-glyceraldehyde 3-phosphate: step 1/5. Glyceraldehyde-3-phosphate dehydrogenase activity is inhibited by fumarate, via the formation of S-(2-succinyl)cysteine residues. Its function is as follows. Has both glyceraldehyde-3-phosphate dehydrogenase and nitrosylase activities, thereby playing a role in glycolysis and nuclear functions, respectively. Glyceraldehyde-3-phosphate dehydrogenase is a key enzyme in glycolysis that catalyzes the first step of the pathway by converting D-glyceraldehyde 3-phosphate (G3P) into 3-phospho-D-glyceroyl phosphate. Modulates the organization and assembly of the cytoskeleton. Facilitates the CHP1-dependent microtubule and membrane associations through its ability to stimulate the binding of CHP1 to microtubules. Component of the GAIT (gamma interferon-activated inhibitor of translation) complex which mediates interferon-gamma-induced transcript-selective translation inhibition in inflammation processes. Upon interferon-gamma treatment assembles into the GAIT complex which binds to stem loop-containing GAIT elements in the 3'-UTR of diverse inflammatory mRNAs (such as ceruplasmin) and suppresses their translation. Also plays a role in innate immunity by promoting TNF-induced NF-kappa-B activation and type I interferon production, via interaction with TRAF2 and TRAF3, respectively. Participates in nuclear events including transcription, RNA transport, DNA replication and apoptosis. Nuclear functions are probably due to the nitrosylase activity that mediates cysteine S-nitrosylation of nuclear target proteins such as SIRT1, HDAC2 and PRKDC. The protein is Glyceraldehyde-3-phosphate dehydrogenase, muscle of Jaculus orientalis (Greater Egyptian jerboa).